The sequence spans 100 residues: Urease subunit gamma (100 aa).

This sequence belongs to the urease gamma subunit family. Heterotrimer of UreA (gamma), UreB (beta) and UreC (alpha) subunits. Three heterotrimers associate to form the active enzyme.

The protein resides in the cytoplasm. The enzyme catalyses urea + 2 H2O + H(+) = hydrogencarbonate + 2 NH4(+). The protein operates within nitrogen metabolism; urea degradation; CO(2) and NH(3) from urea (urease route): step 1/1. This chain is Urease subunit gamma, found in Mycolicibacterium smegmatis (strain ATCC 700084 / mc(2)155) (Mycobacterium smegmatis).